The chain runs to 136 residues: ATP synthase F(0) complex subunit C1, mitochondrial (136 aa).

A mitochondrion-targeting transit peptide spans 1–61; the sequence is MQTTGALLIS…REFQTSVVSR (61 aa). The helical transmembrane segment at 77-97 threads the bilayer; the sequence is VGVAGSGAGIGTVFGSLIIGY. N6,N6,N6-trimethyllysine is present on lysine 104. Residues 112-132 traverse the membrane as a helical segment; sequence ILGFALSEAMGLFCLMVAFLI.

It belongs to the ATPase C chain family. Homooctamer; the c-ring consists of eight c subunits forming a circle, and each subunit adopts a hairpin shape. Component of the ATP synthase complex composed at least of ATP5F1A/subunit alpha, ATP5F1B/subunit beta, ATP5MC1/subunit c (homooctomer), MT-ATP6/subunit a, MT-ATP8/subunit 8, ATP5ME/subunit e, ATP5MF/subunit f, ATP5MG/subunit g, ATP5MK/subunit k, ATP5MJ/subunit j, ATP5F1C/subunit gamma, ATP5F1D/subunit delta, ATP5F1E/subunit epsilon, ATP5PF/subunit F6, ATP5PB/subunit b, ATP5PD/subunit d, ATP5PO/subunit OSCP. ATP synthase complex consists of a soluble F(1) head domain (subunits alpha(3) and beta(3)) - the catalytic core - and a membrane F(0) domain - the membrane proton channel (subunits c, a, 8, e, f, g, k and j). These two domains are linked by a central stalk (subunits gamma, delta, and epsilon) rotating inside the F1 region and a stationary peripheral stalk (subunits F6, b, d, and OSCP). Interacts with TMEM70 (homooligomer form); this interaction facilitates the oligomer formation of subunit c/ATP5MC1 (c-ring) and the c-ring membrane insertion and also protects ATP5MC1 against intramitochondrial proteolysis. In terms of processing, trimethylated by ATPSCKMT at Lys-104. Methylation is required for proper incorporation of the C subunit into the ATP synthase complex and mitochondrial respiration.

The protein localises to the mitochondrion membrane. The enzyme catalyses H(+)(in) = H(+)(out). In terms of biological role, subunit c, of the mitochondrial membrane ATP synthase complex (F(1)F(0) ATP synthase or Complex V) that produces ATP from ADP in the presence of a proton gradient across the membrane which is generated by electron transport complexes of the respiratory chain. ATP synthase complex consist of a soluble F(1) head domain - the catalytic core - and a membrane F(1) domain - the membrane proton channel. These two domains are linked by a central stalk rotating inside the F(1) region and a stationary peripheral stalk. During catalysis, ATP synthesis in the catalytic domain of F(1) is coupled via a rotary mechanism of the central stalk subunits to proton translocation. With the subunit a (MT-ATP6), forms the proton-conducting channel in the F(0) domain, that contains two crucial half-channels (inlet and outlet) that facilitate proton movement from the mitochondrial intermembrane space (IMS) into the matrix. Protons are taken up via the inlet half-channel and released through the outlet half-channel, following a Grotthuss mechanism. In Bos taurus (Bovine), this protein is ATP synthase F(0) complex subunit C1, mitochondrial.